Reading from the N-terminus, the 155-residue chain is Transcriptional repressor NrdR (155 aa).

Residues 3–34 fold into a zinc finger; that stretch reads CPNCHQNASRVIDSRPTDEGRTIRRRRECENC. The 91-residue stretch at 49–139 folds into the ATP-cone domain; it reads LLVIKNDGTR…IYRQFTDMSS (91 aa).

It belongs to the NrdR family. Requires Zn(2+) as cofactor.

Negatively regulates transcription of bacterial ribonucleotide reductase nrd genes and operons by binding to NrdR-boxes. The protein is Transcriptional repressor NrdR of Lactobacillus delbrueckii subsp. bulgaricus (strain ATCC 11842 / DSM 20081 / BCRC 10696 / JCM 1002 / NBRC 13953 / NCIMB 11778 / NCTC 12712 / WDCM 00102 / Lb 14).